A 319-amino-acid polypeptide reads, in one-letter code: Cytochrome c biogenesis protein CcsA (319 aa).

8 consecutive transmembrane segments (helical) span residues 9-29 (ILTH…LISL), 48-68 (TFFC…HFPL), 71-91 (LYES…VPYF), 98-118 (LSTI…SGLL), 143-163 (MILG…LLVI), 225-245 (IISL…VWAN), 258-275 (ETWA…LHTR), and 286-306 (AIVA…VNLL).

This sequence belongs to the CcmF/CycK/Ccl1/NrfE/CcsA family. As to quaternary structure, may interact with Ccs1.

It is found in the plastid. The protein localises to the chloroplast thylakoid membrane. Its function is as follows. Required during biogenesis of c-type cytochromes (cytochrome c6 and cytochrome f) at the step of heme attachment. The protein is Cytochrome c biogenesis protein CcsA of Eucalyptus globulus subsp. globulus (Tasmanian blue gum).